Reading from the N-terminus, the 235-residue chain is Motile sperm domain-containing protein 3 (235 aa).

Disordered stretches follow at residues 1–30 and 143–170; these read MRRG…PSGP and ELQG…PFPE. Residues 33 to 145 form the MSP domain; sequence PVLVFPPDLV…RAPAYPLELQ (113 aa). 2 helical membrane passes run 180 to 200 and 213 to 233; these read SFLL…LPLQ and VSLG…MVFL.

It localises to the membrane. This chain is Motile sperm domain-containing protein 3 (MOSPD3), found in Bos taurus (Bovine).